The chain runs to 180 residues: ATP synthase subunit b 2 (180 aa).

A helical membrane pass occupies residues 33–53 (IFWLLVTLVAIYFLLTRVALP).

Belongs to the ATPase B chain family. F-type ATPases have 2 components, F(1) - the catalytic core - and F(0) - the membrane proton channel. F(1) has five subunits: alpha(3), beta(3), gamma(1), delta(1), epsilon(1). F(0) has three main subunits: a(1), b(2) and c(10-14). The alpha and beta chains form an alternating ring which encloses part of the gamma chain. F(1) is attached to F(0) by a central stalk formed by the gamma and epsilon chains, while a peripheral stalk is formed by the delta and b chains.

It localises to the cell inner membrane. F(1)F(0) ATP synthase produces ATP from ADP in the presence of a proton or sodium gradient. F-type ATPases consist of two structural domains, F(1) containing the extramembraneous catalytic core and F(0) containing the membrane proton channel, linked together by a central stalk and a peripheral stalk. During catalysis, ATP synthesis in the catalytic domain of F(1) is coupled via a rotary mechanism of the central stalk subunits to proton translocation. Its function is as follows. Component of the F(0) channel, it forms part of the peripheral stalk, linking F(1) to F(0). The b'-subunit is a diverged and duplicated form of b found in plants and photosynthetic bacteria. The sequence is that of ATP synthase subunit b 2 (atpF2) from Cereibacter sphaeroides (strain ATCC 17029 / ATH 2.4.9) (Rhodobacter sphaeroides).